A 356-amino-acid polypeptide reads, in one-letter code: Holliday junction branch migration complex subunit RuvB (356 aa).

Residues 4 to 191 (TDKLATEQRI…FGIVARLEFY (188 aa)) form a large ATPase domain (RuvB-L) region. ATP contacts are provided by residues Leu-30, Arg-31, Gly-72, Lys-75, Thr-76, Thr-77, 138–140 (EDY), Arg-181, Tyr-191, and Arg-228. Residue Thr-76 coordinates Mg(2+). Residues 192–262 (DAEQLSRIVR…VADAALAMLD (71 aa)) form a small ATPAse domain (RuvB-S) region. The head domain (RuvB-H) stretch occupies residues 265-356 (PVGFDLMDRK…RGEWDTPDGK (92 aa)). DNA-binding residues include Arg-301, Arg-320, and Arg-325.

It belongs to the RuvB family. In terms of assembly, homohexamer. Forms an RuvA(8)-RuvB(12)-Holliday junction (HJ) complex. HJ DNA is sandwiched between 2 RuvA tetramers; dsDNA enters through RuvA and exits via RuvB. An RuvB hexamer assembles on each DNA strand where it exits the tetramer. Each RuvB hexamer is contacted by two RuvA subunits (via domain III) on 2 adjacent RuvB subunits; this complex drives branch migration. In the full resolvosome a probable DNA-RuvA(4)-RuvB(12)-RuvC(2) complex forms which resolves the HJ.

It localises to the cytoplasm. The enzyme catalyses ATP + H2O = ADP + phosphate + H(+). In terms of biological role, the RuvA-RuvB-RuvC complex processes Holliday junction (HJ) DNA during genetic recombination and DNA repair, while the RuvA-RuvB complex plays an important role in the rescue of blocked DNA replication forks via replication fork reversal (RFR). RuvA specifically binds to HJ cruciform DNA, conferring on it an open structure. The RuvB hexamer acts as an ATP-dependent pump, pulling dsDNA into and through the RuvAB complex. RuvB forms 2 homohexamers on either side of HJ DNA bound by 1 or 2 RuvA tetramers; 4 subunits per hexamer contact DNA at a time. Coordinated motions by a converter formed by DNA-disengaged RuvB subunits stimulates ATP hydrolysis and nucleotide exchange. Immobilization of the converter enables RuvB to convert the ATP-contained energy into a lever motion, pulling 2 nucleotides of DNA out of the RuvA tetramer per ATP hydrolyzed, thus driving DNA branch migration. The RuvB motors rotate together with the DNA substrate, which together with the progressing nucleotide cycle form the mechanistic basis for DNA recombination by continuous HJ branch migration. Branch migration allows RuvC to scan DNA until it finds its consensus sequence, where it cleaves and resolves cruciform DNA. The protein is Holliday junction branch migration complex subunit RuvB of Burkholderia lata (strain ATCC 17760 / DSM 23089 / LMG 22485 / NCIMB 9086 / R18194 / 383).